Consider the following 216-residue polypeptide: Uracil phosphoribosyltransferase (216 aa).

GTP contacts are provided by residues arginine 32, arginine 41, 75–78 (MGKI), and lysine 77. Serine 82 is modified (phosphoserine). Position 85 (arginine 85) interacts with 5-phospho-alpha-D-ribose 1-diphosphate. Arginine 102 contributes to the GTP binding site. Arginine 110 is a 5-phospho-alpha-D-ribose 1-diphosphate binding site. Arginine 131 lines the GTP pocket. 5-phospho-alpha-D-ribose 1-diphosphate contacts are provided by residues aspartate 137 and 137 to 145 (DPMLATGGS). A D-ribose 5-phosphate-binding site is contributed by tyrosine 201. Residues leucine 202 and 207 to 209 (GDF) each bind uracil. Aspartate 208 is a binding site for 5-phospho-alpha-D-ribose 1-diphosphate.

Belongs to the UPRTase family. It depends on Mg(2+) as a cofactor.

The enzyme catalyses UMP + diphosphate = 5-phospho-alpha-D-ribose 1-diphosphate + uracil. The protein operates within pyrimidine metabolism; UMP biosynthesis via salvage pathway; UMP from uracil: step 1/1. With respect to regulation, allosterically activated by GTP. Catalyzes the conversion of uracil and 5-phospho-alpha-D-ribose 1-diphosphate (PRPP) to UMP and diphosphate in the pyrimidine salvage pathway. The sequence is that of Uracil phosphoribosyltransferase (FUR1) from Saccharomyces cerevisiae (strain ATCC 204508 / S288c) (Baker's yeast).